A 99-amino-acid polypeptide reads, in one-letter code: Biogenesis of lysosome-related organelles complex 1 subunit SNN1 (99 aa).

Positions 34 to 94 (SINELRESQA…VVLKRYEKMV (61 aa)) form a coiled coil.

It belongs to the SNAPIN family. Component of the biogenesis of lysosome-related organelles complex-1 (BLOC-1).

The protein localises to the endosome. Component of the biogenesis of lysosome-related organelles complex-1 (BLOC-1), a complex involved in endosomal cargo sorting. In Kluyveromyces lactis (strain ATCC 8585 / CBS 2359 / DSM 70799 / NBRC 1267 / NRRL Y-1140 / WM37) (Yeast), this protein is Biogenesis of lysosome-related organelles complex 1 subunit SNN1 (SNN1).